Here is a 389-residue protein sequence, read N- to C-terminus: Probable peptide chain release factor 1, mitochondrial (389 aa).

The residue at position 259 (glutamine 259) is an N5-methylglutamine.

This sequence belongs to the prokaryotic/mitochondrial release factor family. Post-translationally, methylation of glutamine in the GGQ triplet is conserved from bacteria to mammals.

It localises to the mitochondrion. Mitochondrial peptide chain release factor that directs the termination of translation in response to the peptide chain termination codons UAA and UAG. The sequence is that of Probable peptide chain release factor 1, mitochondrial from Caenorhabditis elegans.